Reading from the N-terminus, the 217-residue chain is UPF0502 protein VIBHAR_05349 (217 aa).

This sequence belongs to the UPF0502 family.

This is UPF0502 protein VIBHAR_05349 from Vibrio campbellii (strain ATCC BAA-1116).